Reading from the N-terminus, the 355-residue chain is Undecaprenyl-phosphate alpha-N-acetylglucosaminyl 1-phosphate transferase (355 aa).

Transmembrane regions (helical) follow at residues 1-21, 39-59, 63-83, 123-143, 182-202, 208-228, 237-257, and 315-335; these read MLSIFVTFLGAFLTLIVMRPL, GTIPLIGGASLFVGNLCYYLM, QLRLPYLYLFSIFVLLAIGIL, FQLTLGSIGLIITVFATIAII, WSFALIVSILPYLMLNLGIPF, VFMGDAGSTLIGFTIIWILLL, MNPVTALWIIAIPLIDMVAII, and WAMFVGFFILFFLYVYSITHA.

Belongs to the glycosyltransferase 4 family. WecA subfamily. Requires Mg(2+) as cofactor. Mn(2+) is required as a cofactor.

It localises to the cell inner membrane. The catalysed reaction is di-trans,octa-cis-undecaprenyl phosphate + UDP-N-acetyl-alpha-D-glucosamine = N-acetyl-alpha-D-glucosaminyl-di-trans,octa-cis-undecaprenyl diphosphate + UMP. The protein operates within bacterial outer membrane biogenesis; LPS O-antigen biosynthesis. Catalyzes the transfer of the GlcNAc-1-phosphate moiety from UDP-GlcNAc onto the carrier lipid undecaprenyl phosphate (C55-P), yielding GlcNAc-pyrophosphoryl-undecaprenyl (GlcNAc-PP-C55). This is Undecaprenyl-phosphate alpha-N-acetylglucosaminyl 1-phosphate transferase from Haemophilus influenzae (strain ATCC 51907 / DSM 11121 / KW20 / Rd).